The sequence spans 63 residues: MKAQDLRQKSVEELKTELLGLLRAQFNLRIQKSTGQLNQTHTIKQVRRDIARVKTVLNEKAGA.

The protein belongs to the universal ribosomal protein uL29 family.

This Tolumonas auensis (strain DSM 9187 / NBRC 110442 / TA 4) protein is Large ribosomal subunit protein uL29.